A 741-amino-acid polypeptide reads, in one-letter code: NAD(P)H-quinone oxidoreductase subunit 5, chloroplastic (741 aa).

18 helical membrane-spanning segments follow: residues 9-29, 40-60, 89-109, 124-144, 147-167, 185-205, 218-238, 258-278, 286-306, 327-347, 354-374, 395-415, 427-447, 550-570, 601-621, 651-671, 687-707, and 719-739; these read WIVP…SLFF, WALI…NLFL, IDPL…MVMI, FFAY…SPNL, IYIF…FWFT, GDFG…SFEF, IDGV…LGPV, TPIS…FLVA, ALPL…LLGA, LGYM…FHLI, ALLF…VGYC, GITF…ACFW, YSPI…FYMF, FPLV…VPFF, FFID…IACI, IIYN…IILI, WAID…GEGM, and IFFS…SFSF.

This sequence belongs to the complex I subunit 5 family. In terms of assembly, NDH is composed of at least 16 different subunits, 5 of which are encoded in the nucleus.

It is found in the plastid. It localises to the chloroplast thylakoid membrane. It carries out the reaction a plastoquinone + NADH + (n+1) H(+)(in) = a plastoquinol + NAD(+) + n H(+)(out). The enzyme catalyses a plastoquinone + NADPH + (n+1) H(+)(in) = a plastoquinol + NADP(+) + n H(+)(out). Functionally, NDH shuttles electrons from NAD(P)H:plastoquinone, via FMN and iron-sulfur (Fe-S) centers, to quinones in the photosynthetic chain and possibly in a chloroplast respiratory chain. The immediate electron acceptor for the enzyme in this species is believed to be plastoquinone. Couples the redox reaction to proton translocation, and thus conserves the redox energy in a proton gradient. In Cryptomeria japonica (Japanese cedar), this protein is NAD(P)H-quinone oxidoreductase subunit 5, chloroplastic (ndhF).